The primary structure comprises 67 residues: MGEISITKLLVVAALIVLVFGTKKLRTLGGDLGSAIKGFKKAMNDDDTSVKKSAEEDVPADKISHKE.

Residues isoleucine 4 to glycine 21 traverse the membrane as a helical segment. The disordered stretch occupies residues methionine 43–glutamate 67.

This sequence belongs to the TatA/E family. TatE subfamily.

Its subcellular location is the cell inner membrane. Functionally, part of the twin-arginine translocation (Tat) system that transports large folded proteins containing a characteristic twin-arginine motif in their signal peptide across membranes. TatE shares overlapping functions with TatA. This is Probable Sec-independent protein translocase protein TatE from Enterobacter lignolyticus (strain SCF1).